Here is a 350-residue protein sequence, read N- to C-terminus: Probable poly-beta-1,6-N-acetyl-D-glucosamine export protein (350 aa).

10 helical membrane-spanning segments follow: residues leucine 8 to isoleucine 28, leucine 40 to leucine 60, tyrosine 83 to threonine 103, glutamine 119 to phenylalanine 139, phenylalanine 146 to phenylalanine 166, leucine 182 to glycine 202, leucine 216 to glycine 236, isoleucine 254 to isoleucine 274, methionine 276 to phenylalanine 296, and valine 308 to leucine 328.

Belongs to the acyltransferase 3 family.

The protein localises to the cell membrane. Its function is as follows. Presumably involved in the export of the biofilm adhesin polysaccharide poly-beta-1,6-N-acetyl-D-glucosamine (PNAG, also referred to as PIA) across the cell membrane. This Staphylococcus aureus (strain NCTC 8325 / PS 47) protein is Probable poly-beta-1,6-N-acetyl-D-glucosamine export protein (icaC).